Here is a 275-residue protein sequence, read N- to C-terminus: NH(3)-dependent NAD(+) synthetase (275 aa).

ATP is bound at residue 47–54; the sequence is GMSGGQDS. Asp53 serves as a coordination point for Mg(2+). A deamido-NAD(+)-binding site is contributed by Arg141. Position 161 (Thr161) interacts with ATP. Glu166 is a Mg(2+) binding site. Residues Lys174 and Asp181 each coordinate deamido-NAD(+). Lys190 and Thr212 together coordinate ATP. 261–262 is a binding site for deamido-NAD(+); sequence HK.

It belongs to the NAD synthetase family. As to quaternary structure, homodimer.

It catalyses the reaction deamido-NAD(+) + NH4(+) + ATP = AMP + diphosphate + NAD(+) + H(+). It participates in cofactor biosynthesis; NAD(+) biosynthesis; NAD(+) from deamido-NAD(+) (ammonia route): step 1/1. Catalyzes the ATP-dependent amidation of deamido-NAD to form NAD. Uses ammonia as a nitrogen source. This Oceanobacillus iheyensis (strain DSM 14371 / CIP 107618 / JCM 11309 / KCTC 3954 / HTE831) protein is NH(3)-dependent NAD(+) synthetase.